The primary structure comprises 353 residues: Phosphoribosylformylglycinamidine cyclo-ligase (353 aa).

Belongs to the AIR synthase family.

It localises to the cytoplasm. It carries out the reaction 2-formamido-N(1)-(5-O-phospho-beta-D-ribosyl)acetamidine + ATP = 5-amino-1-(5-phospho-beta-D-ribosyl)imidazole + ADP + phosphate + H(+). It participates in purine metabolism; IMP biosynthesis via de novo pathway; 5-amino-1-(5-phospho-D-ribosyl)imidazole from N(2)-formyl-N(1)-(5-phospho-D-ribosyl)glycinamide: step 2/2. In Dinoroseobacter shibae (strain DSM 16493 / NCIMB 14021 / DFL 12), this protein is Phosphoribosylformylglycinamidine cyclo-ligase.